The sequence spans 78 residues: uncharacterized protein (78 aa).

This is an uncharacterized protein from Methanocaldococcus jannaschii (strain ATCC 43067 / DSM 2661 / JAL-1 / JCM 10045 / NBRC 100440) (Methanococcus jannaschii).